The sequence spans 124 residues: Small ribosomal subunit protein uS12 (124 aa).

The disordered stretch occupies residues 9-28 (KSERTVQKNQTKSPALDSCP). 3-methylthioaspartic acid is present on Asp89.

This sequence belongs to the universal ribosomal protein uS12 family. As to quaternary structure, part of the 30S ribosomal subunit. Contacts proteins S8 and S17. May interact with IF1 in the 30S initiation complex.

Its function is as follows. With S4 and S5 plays an important role in translational accuracy. Functionally, interacts with and stabilizes bases of the 16S rRNA that are involved in tRNA selection in the A site and with the mRNA backbone. Located at the interface of the 30S and 50S subunits, it traverses the body of the 30S subunit contacting proteins on the other side and probably holding the rRNA structure together. The combined cluster of proteins S8, S12 and S17 appears to hold together the shoulder and platform of the 30S subunit. In Bdellovibrio bacteriovorus (strain ATCC 15356 / DSM 50701 / NCIMB 9529 / HD100), this protein is Small ribosomal subunit protein uS12.